The chain runs to 494 residues: Chromosomal replication initiator protein DnaA (494 aa).

The interval 1–103 is domain I, interacts with DnaA modulators; that stretch reads MTTDPDPPFV…PVSDESDSGS (103 aa). The disordered stretch occupies residues 94 to 117; it reads PVSDESDSGSVASPAPVAAADPDD. Low complexity predominate over residues 101–113; that stretch reads SGSVASPAPVAAA. The domain II stretch occupies residues 104 to 153; it reads VASPAPVAAADPDDDVVDDDLAARASAEESWPSYFTNRANRAAEDDATSV. The domain III, AAA+ region stretch occupies residues 154–370; the sequence is NLNRRYTFDT…GALIRVTAFA (217 aa). The ATP site is built by glycine 198, glycine 200, lysine 201, and threonine 202. Residues 371-494 are domain IV, binds dsDNA; the sequence is SLNKTPIDKS…TTRIRQRAKR (124 aa).

Belongs to the DnaA family. As to quaternary structure, oligomerizes as a right-handed, spiral filament on DNA at oriC.

It localises to the cytoplasm. Plays an essential role in the initiation and regulation of chromosomal replication. ATP-DnaA binds to the origin of replication (oriC) to initiate formation of the DNA replication initiation complex once per cell cycle. Binds the DnaA box (a 9 base pair repeat at the origin) and separates the double-stranded (ds)DNA. Forms a right-handed helical filament on oriC DNA; dsDNA binds to the exterior of the filament while single-stranded (ss)DNA is stabiized in the filament's interior. The ATP-DnaA-oriC complex binds and stabilizes one strand of the AT-rich DNA unwinding element (DUE), permitting loading of DNA polymerase. After initiation quickly degrades to an ADP-DnaA complex that is not apt for DNA replication. Binds acidic phospholipids. The polypeptide is Chromosomal replication initiator protein DnaA (Mycolicibacterium vanbaalenii (strain DSM 7251 / JCM 13017 / BCRC 16820 / KCTC 9966 / NRRL B-24157 / PYR-1) (Mycobacterium vanbaalenii)).